Reading from the N-terminus, the 403-residue chain is Phosphoglycerate kinase (403 aa).

Substrate-binding positions include 24–26, Arg-39, 62–65, Arg-121, and Arg-161; these read DLN and HLGR. Residues Lys-211, Gly-299, Glu-330, and 359–362 each bind ATP; that span reads GGDS.

It belongs to the phosphoglycerate kinase family. Monomer.

The protein resides in the cytoplasm. The catalysed reaction is (2R)-3-phosphoglycerate + ATP = (2R)-3-phospho-glyceroyl phosphate + ADP. It participates in carbohydrate degradation; glycolysis; pyruvate from D-glyceraldehyde 3-phosphate: step 2/5. This chain is Phosphoglycerate kinase, found in Corynebacterium kroppenstedtii (strain DSM 44385 / JCM 11950 / CIP 105744 / CCUG 35717).